A 92-amino-acid polypeptide reads, in one-letter code: Long neurotoxin 469 (92 aa).

Positions 1–21 are cleaved as a signal peptide; sequence MKTLLLTLVVVTIVCLDLGDS. Intrachain disulfides connect Cys24-Cys41, Cys34-Cys62, Cys47-Cys51, Cys66-Cys77, and Cys78-Cys83.

Belongs to the three-finger toxin family. Long-chain subfamily. Type II alpha-neurotoxin sub-subfamily. Expressed by the venom gland.

Its subcellular location is the secreted. Binds with high affinity to muscular (alpha-1/CHRNA1) and neuronal (alpha-7/CHRNA7) nicotinic acetylcholine receptor (nAChR) and inhibits acetylcholine from binding to the receptor, thereby impairing neuromuscular and neuronal transmission. This is Long neurotoxin 469 from Drysdalia coronoides (White-lipped snake).